A 249-amino-acid chain; its full sequence is GTP cyclohydrolase III (249 aa).

Belongs to the archaeal-type GTP cyclohydrolase family.

The catalysed reaction is GTP + 3 H2O = 2-amino-5-formylamino-6-(5-phospho-D-ribosylamino)pyrimidin-4(3H)-one + 2 phosphate + 2 H(+). Functionally, catalyzes the formation of 2-amino-5-formylamino-6-ribofuranosylamino-4(3H)-pyrimidinone ribonucleotide monophosphate and inorganic phosphate from GTP. Also has an independent pyrophosphate phosphohydrolase activity. This Methanothermobacter thermautotrophicus (strain ATCC 29096 / DSM 1053 / JCM 10044 / NBRC 100330 / Delta H) (Methanobacterium thermoautotrophicum) protein is GTP cyclohydrolase III.